The following is a 1138-amino-acid chain: uncharacterized protein (1138 aa).

2 disordered regions span residues 985–1015 and 1094–1138; these read EKKL…MAQE and LVAT…QNKL. A compositionally biased stretch (acidic residues) spans 1110–1138; that stretch reads DDDEYEKYDSGIEDIETDVDEEEEVQNKL.

This is an uncharacterized protein from Ostreid herpesvirus 1 (isolate France) (OsHV-1).